The primary structure comprises 216 residues: Refilin-B (216 aa).

Residues 1–52 (MVGRLSLQDVPELVDTKKKGDGVLDSPDSGLPPSPSPSHWGLAAATGGGGER) form a disordered region. 2 positions are modified to phosphoserine: Ser-6 and Ser-26.

Belongs to the Refilin family. In terms of assembly, interacts with FLNA and FLNB.

The protein resides in the cytoplasm. The protein localises to the cytoskeleton. In terms of biological role, involved in the regulation of the perinuclear actin network and nuclear shape through interaction with filamins. Plays an essential role in the formation of cartilaginous skeletal elements. This is Refilin-B from Rattus norvegicus (Rat).